An 89-amino-acid polypeptide reads, in one-letter code: MSDNNEKQTLRTVEGRVVSNKMDKTVTVLVERQVKHPLYGKYIKRSSKLHAHDADNACNEGDVVRVTEIAPMSKTKNWRVVEIVSRAAV.

It belongs to the universal ribosomal protein uS17 family. Part of the 30S ribosomal subunit.

One of the primary rRNA binding proteins, it binds specifically to the 5'-end of 16S ribosomal RNA. The chain is Small ribosomal subunit protein uS17 from Xanthomonas campestris pv. campestris (strain B100).